The sequence spans 117 residues: Large ribosomal subunit protein uL18 (117 aa).

This sequence belongs to the universal ribosomal protein uL18 family. Part of the 50S ribosomal subunit; part of the 5S rRNA/L5/L18/L25 subcomplex. Contacts the 5S and 23S rRNAs.

In terms of biological role, this is one of the proteins that bind and probably mediate the attachment of the 5S RNA into the large ribosomal subunit, where it forms part of the central protuberance. The protein is Large ribosomal subunit protein uL18 of Acidithiobacillus ferrooxidans (strain ATCC 23270 / DSM 14882 / CIP 104768 / NCIMB 8455) (Ferrobacillus ferrooxidans (strain ATCC 23270)).